The primary structure comprises 367 residues: MEAERLNAIESSLADLRRRAGELRGYLDYDVKSERLAEVNKQLEDPNVWNDSKNAQALGREKKSLESVVTTLTALDNDLRDAQDLFELAHEEGDEETLVATESDAAKLEARVADIEFRRMFSNPADPNNCFIDIQAGAGGTEACDWASMLLRQYLRYCERKGFKAEVLEESDGDVAGIKNATIKVSGEYAYGYLRTETGIHRLVRKSPFDSSGGRHTSFSSVFVYPEIDDSIEVEINPADLRIDTYRASGAGGQHINKTDSAVRITHMPTGIVVQCQNDRSQHRNRAEAMAMLKSRLFEAELRKRQAEQDKLESSKTDVGWGHQIRSYVLDQSRVKDLRTNVEMSNTKAVLDGDLDDFISASLKQGV.

N5-methylglutamine is present on Gln254.

This sequence belongs to the prokaryotic/mitochondrial release factor family. Post-translationally, methylated by PrmC. Methylation increases the termination efficiency of RF2.

The protein resides in the cytoplasm. Peptide chain release factor 2 directs the termination of translation in response to the peptide chain termination codons UGA and UAA. This Burkholderia mallei (strain ATCC 23344) protein is Peptide chain release factor 2.